A 183-amino-acid polypeptide reads, in one-letter code: Protein Syd (183 aa).

It belongs to the Syd family.

The protein localises to the cell inner membrane. Interacts with the SecY protein in vivo. May bind preferentially to an uncomplexed state of SecY, thus functioning either as a chelating agent for excess SecY in the cell or as a regulatory factor that negatively controls the translocase function. The sequence is that of Protein Syd from Yersinia pestis bv. Antiqua (strain Antiqua).